The primary structure comprises 464 residues: Soluble pyridine nucleotide transhydrogenase (464 aa).

Residue 35-44 (DDRPQVGGNC) participates in FAD binding.

The protein belongs to the class-I pyridine nucleotide-disulfide oxidoreductase family. FAD serves as cofactor.

Its subcellular location is the cytoplasm. It catalyses the reaction NAD(+) + NADPH = NADH + NADP(+). Functionally, conversion of NADPH, generated by peripheral catabolic pathways, to NADH, which can enter the respiratory chain for energy generation. This Azotobacter vinelandii (strain DJ / ATCC BAA-1303) protein is Soluble pyridine nucleotide transhydrogenase.